The chain runs to 127 residues: Glycine cleavage system H protein (127 aa).

The 83-residue stretch at 22–104 (KVRIGITHFA…YEKAWMIVVE (83 aa)) folds into the Lipoyl-binding domain. Lysine 63 bears the N6-lipoyllysine mark.

It belongs to the GcvH family. As to quaternary structure, the glycine cleavage system is composed of four proteins: P, T, L and H. The cofactor is (R)-lipoate.

In terms of biological role, the glycine cleavage system catalyzes the degradation of glycine. The H protein shuttles the methylamine group of glycine from the P protein to the T protein. Its function is as follows. Is also involved in protein lipoylation via its role as an octanoyl/lipoyl carrier protein intermediate. The sequence is that of Glycine cleavage system H protein from Bacillus pumilus (strain SAFR-032).